The following is a 388-amino-acid chain: Outer membrane protein assembly factor BamB (388 aa).

Residues 1–21 (MILGWTQRIFTLLVVVTLLAA) form the signal peptide. The N-palmitoyl cysteine moiety is linked to residue Cys-22. A lipid anchor (S-diacylglycerol cysteine) is attached at Cys-22.

It belongs to the BamB family. As to quaternary structure, part of the Bam complex.

It is found in the cell outer membrane. Part of the outer membrane protein assembly complex, which is involved in assembly and insertion of beta-barrel proteins into the outer membrane. The protein is Outer membrane protein assembly factor BamB of Kangiella koreensis (strain DSM 16069 / JCM 12317 / KCTC 12182 / SW-125).